A 553-amino-acid polypeptide reads, in one-letter code: Glutamate--tRNA ligase (553 aa).

Residues 41 to 51 carry the 'HIGH' region motif; the sequence is PSPTGFQHIGG. Positions 293-297 match the 'KMSKS' region motif; sequence KLSKR. K296 is an ATP binding site.

This sequence belongs to the class-I aminoacyl-tRNA synthetase family. Glutamate--tRNA ligase type 1 subfamily. In terms of assembly, monomer.

It is found in the cytoplasm. The catalysed reaction is tRNA(Glu) + L-glutamate + ATP = L-glutamyl-tRNA(Glu) + AMP + diphosphate. Its function is as follows. Catalyzes the attachment of glutamate to tRNA(Glu) in a two-step reaction: glutamate is first activated by ATP to form Glu-AMP and then transferred to the acceptor end of tRNA(Glu). This chain is Glutamate--tRNA ligase, found in Clostridium beijerinckii (strain ATCC 51743 / NCIMB 8052) (Clostridium acetobutylicum).